Reading from the N-terminus, the 80-residue chain is Conotoxin Bu14 (80 aa).

Positions 1 to 8 (AACQLGTA) are cleaved as a signal peptide. The propeptide occupies 9–40 (ASFARDKQDYPAVRSDGRQDSKDSTLDRIAKR). 3 cysteine pairs are disulfide-bonded: Cys-41/Cys-55, Cys-48/Cys-59, and Cys-54/Cys-69.

The protein belongs to the conotoxin O1 superfamily. In terms of tissue distribution, expressed by the venom duct.

The protein resides in the secreted. The sequence is that of Conotoxin Bu14 from Conus bullatus (Bubble cone).